Here is a 193-residue protein sequence, read N- to C-terminus: Potassium-transporting ATPase KdpC subunit (193 aa).

The chain crosses the membrane as a helical span at residues 14–34 (ITFTFLVLCGLVYPLIVTGIA).

This sequence belongs to the KdpC family. As to quaternary structure, the system is composed of three essential subunits: KdpA, KdpB and KdpC.

The protein resides in the cell membrane. Functionally, part of the high-affinity ATP-driven potassium transport (or Kdp) system, which catalyzes the hydrolysis of ATP coupled with the electrogenic transport of potassium into the cytoplasm. This subunit acts as a catalytic chaperone that increases the ATP-binding affinity of the ATP-hydrolyzing subunit KdpB by the formation of a transient KdpB/KdpC/ATP ternary complex. The chain is Potassium-transporting ATPase KdpC subunit from Bacillus cereus (strain G9842).